We begin with the raw amino-acid sequence, 125 residues long: Holo-[acyl-carrier-protein] synthase (125 aa).

Mg(2+) contacts are provided by D8 and E57.

The protein belongs to the P-Pant transferase superfamily. AcpS family. It depends on Mg(2+) as a cofactor.

The protein resides in the cytoplasm. It catalyses the reaction apo-[ACP] + CoA = holo-[ACP] + adenosine 3',5'-bisphosphate + H(+). Functionally, transfers the 4'-phosphopantetheine moiety from coenzyme A to a Ser of acyl-carrier-protein. The sequence is that of Holo-[acyl-carrier-protein] synthase from Geobacter sp. (strain M21).